A 92-amino-acid chain; its full sequence is Tachykinin-2 (92 aa).

A signal peptide spans methionine 1–alanine 22. A propeptide spanning residues aspartate 23–valine 37 is cleaved from the precursor. Methionine 49 carries the post-translational modification Methionine amide. A propeptide spanning residues serine 52–cysteine 92 is cleaved from the precursor. A disordered region spans residues glutamine 61–cysteine 92.

This sequence belongs to the tachykinin family. In terms of tissue distribution, expressed in the posterior salivary gland and more specifically in the mucus-secreting gland cells.

It is found in the secreted. Tachykinins are active peptides which excite neurons, evoke behavioral responses, are potent vasodilators and secretagogues, and contract (directly or indirectly) many smooth muscles. The chain is Tachykinin-2 from Octopus vulgaris (Common octopus).